A 9518-amino-acid polypeptide reads, in one-letter code: Nonribosomal peptide synthetase ungA' (9518 aa).

The interval 214-611 (ERARETPNAP…ARKDDQVKVR (398 aa)) is adenylation 1. Positions 738 to 814 (APRTEMEWRL…DLAEVARLEQ (77 aa)) constitute a Carrier 1 domain. S775 is modified (O-(pantetheine 4'-phosphoryl)serine). Residues 853-1250 (DLLPCSPLQE…EEVLRQISRE (398 aa)) are condensation 1. Positions 1292–1695 (QRVQEQPDRP…GRKDTQVKIR (404 aa)) are adenylation 2. One can recognise a Carrier 2 domain in the interval 1822–1898 (LPQTELERRL…RLAHCSQTEQ (77 aa)). Position 1859 is an O-(pantetheine 4'-phosphoryl)serine (S1859). Positions 1911–2336 (TFALSPIQQL…QRSLEVVAKE (426 aa)) are epimerization 1. Residues 2376–2803 (EDIYPCSPVQ…DNLQIASSQD (428 aa)) are condensation 2. The tract at residues 2829-3224 (RIQQQPEAPA…NRKDNQVKIR (396 aa)) is adenylation 3. Residues 3352–3428 (APATASEQRL…DMAQTLKVES (77 aa)) enclose the Carrier 3 domain. O-(pantetheine 4'-phosphoryl)serine is present on S3389. The tract at residues 3465–3869 (EDVLPCTPLQ…QVCKEASQYL (405 aa)) is condensation 3. Residues 3906-4307 (QQAHQRPNAS…GRRDAQVKIR (402 aa)) form an adenylation 4 region. One can recognise a Carrier 4 domain in the interval 4436 to 4512 (TPTTITECRI…RLAACTTPVD (77 aa)). S4473 carries the O-(pantetheine 4'-phosphoryl)serine modification. Residues 4527–4954 (ALSPIQQLFV…EDAAQELPSL (428 aa)) form an epimerization 2 region. The segment at 4990 to 5411 (VEDIYPCSPI…ANLISKEDLR (422 aa)) is condensation 4. The segment at 5433-5829 (SEQAQNQPDA…GRKDGQVKIR (397 aa)) is adenylation 5. The region spanning 5957–6033 (VASSPVELAL…QLAKNSGLQA (77 aa)) is the Carrier 5 domain. S5994 is subject to O-(pantetheine 4'-phosphoryl)serine. The tract at residues 6050 to 6470 (ELSPIQRMFF…CEHSLVMAAH (421 aa)) is epimerization 3. The segment at 6512 to 6856 (VEDIYPCTPI…TGISVQNNAS (345 aa)) is condensation 5. Residues 6947 to 7338 (LRPNSSAIHA…GRKDSQVKVR (392 aa)) form an adenylation 6 region. The region spanning 7464-7540 (LPRTEVEMQL…GLAPSAASQA (77 aa)) is the Carrier 6 domain. S7501 is subject to O-(pantetheine 4'-phosphoryl)serine. The interval 7555–7978 (ELSPIQQMFI…LQTAARELPH (424 aa)) is epimerization 4. Residues 8016–8444 (VEDIYPLTPI…QVDLAGRHDQ (429 aa)) are condensation 6. Residues 8468–8867 (MQCQQRPDAT…SRKDAQVKIR (400 aa)) form an adenylation 7 region. The Carrier 7 domain occupies 8995-9071 (PLTTEMEWRL…DMAHYLREGQ (77 aa)). Residue S9032 is modified to O-(pantetheine 4'-phosphoryl)serine. The condensation 7 stretch occupies residues 9111–9454 (DVYPTTELQD…DNLEHDAGTS (344 aa)).

The protein belongs to the NRP synthetase family.

Its pathway is secondary metabolite biosynthesis. Its function is as follows. Nonribosomal peptide synthetase; part of the gene cluster that mediates the biosynthesis of the unguisins, gamma-aminobutyric acid (GABA)-containing fungal cyclic heptapeptides with the amino acid sequence cyclo-(D-Ala1-D-Val2-L-Leu3-beta-MePhe4-D-Ala5-D-Trp6-GABA7) for unguisin H and cyclo-(D-Ala1-D-Ala2-L-Leu3-beta-MePhe4-D-Ala5-D-Trp6-GABA7) for unguisin I. UngA' is the main enzyme within the cluster which condenses the 7 residues using its respective 7 modules. The terminal condensation domain (Ct) is involved in cyclization with D-alanine and thereby releasing of unguisins H and I. The alanine racemase ungC' provides D-alanine, which is then accepted by the first adenylation domain of ungA', whereas the methyltransferase ungE' provides the (2R,3R)-beta-methylphenylalanine residue incorporated by the module 4. Finally, the hydrolase ungD' catalyzes the hydrolysis between the D-tryptophan and GABA residues of unguisins H and I to produce the corresponding linear peptides. This chain is Nonribosomal peptide synthetase ungA', found in Aspergillus campestris (strain IBT 28561).